Here is a 155-residue protein sequence, read N- to C-terminus: Large ribosomal subunit protein uL15 (155 aa).

The segment at 1–63 (MKLHELAPNP…QMPLTRRLPK (63 aa)) is disordered. Gly residues-rich tracts occupy residues 21–31 (RGIGSGLGKTS) and 42–52 (SGGGVRPGFEG).

It belongs to the universal ribosomal protein uL15 family. As to quaternary structure, part of the 50S ribosomal subunit.

Functionally, binds to the 23S rRNA. The chain is Large ribosomal subunit protein uL15 from Symbiobacterium thermophilum (strain DSM 24528 / JCM 14929 / IAM 14863 / T).